A 295-amino-acid chain; its full sequence is Bifunctional protein FolD (295 aa).

NADP(+) contacts are provided by residues 166 to 168 (GRS), S191, and I232.

It belongs to the tetrahydrofolate dehydrogenase/cyclohydrolase family. As to quaternary structure, homodimer.

It catalyses the reaction (6R)-5,10-methylene-5,6,7,8-tetrahydrofolate + NADP(+) = (6R)-5,10-methenyltetrahydrofolate + NADPH. It carries out the reaction (6R)-5,10-methenyltetrahydrofolate + H2O = (6R)-10-formyltetrahydrofolate + H(+). The protein operates within one-carbon metabolism; tetrahydrofolate interconversion. Functionally, catalyzes the oxidation of 5,10-methylenetetrahydrofolate to 5,10-methenyltetrahydrofolate and then the hydrolysis of 5,10-methenyltetrahydrofolate to 10-formyltetrahydrofolate. The protein is Bifunctional protein FolD of Rhodopseudomonas palustris (strain BisB18).